A 642-amino-acid polypeptide reads, in one-letter code: Threonine--tRNA ligase (642 aa).

The 61-residue stretch at 1–61 (MPVITLPDGS…ETDAELSIIT (61 aa)) folds into the TGS domain. Residues 243–534 (DHRKIGKQLD…LIEEYAGRFP (292 aa)) form a catalytic region. Positions 334, 385, and 511 each coordinate Zn(2+).

Belongs to the class-II aminoacyl-tRNA synthetase family. In terms of assembly, homodimer. Zn(2+) is required as a cofactor.

It is found in the cytoplasm. The enzyme catalyses tRNA(Thr) + L-threonine + ATP = L-threonyl-tRNA(Thr) + AMP + diphosphate + H(+). Functionally, catalyzes the attachment of threonine to tRNA(Thr) in a two-step reaction: L-threonine is first activated by ATP to form Thr-AMP and then transferred to the acceptor end of tRNA(Thr). Also edits incorrectly charged L-seryl-tRNA(Thr). The chain is Threonine--tRNA ligase from Shewanella sp. (strain W3-18-1).